A 478-amino-acid polypeptide reads, in one-letter code: Probable cytosol aminopeptidase (478 aa).

Residues Lys244 and Asp249 each contribute to the Mn(2+) site. Lys256 is a catalytic residue. Mn(2+)-binding residues include Asp267, Asp326, and Glu328. Arg330 is an active-site residue.

This sequence belongs to the peptidase M17 family. Mn(2+) serves as cofactor.

It is found in the cytoplasm. The enzyme catalyses Release of an N-terminal amino acid, Xaa-|-Yaa-, in which Xaa is preferably Leu, but may be other amino acids including Pro although not Arg or Lys, and Yaa may be Pro. Amino acid amides and methyl esters are also readily hydrolyzed, but rates on arylamides are exceedingly low.. It carries out the reaction Release of an N-terminal amino acid, preferentially leucine, but not glutamic or aspartic acids.. In terms of biological role, presumably involved in the processing and regular turnover of intracellular proteins. Catalyzes the removal of unsubstituted N-terminal amino acids from various peptides. This chain is Probable cytosol aminopeptidase, found in Fusobacterium nucleatum subsp. nucleatum (strain ATCC 25586 / DSM 15643 / BCRC 10681 / CIP 101130 / JCM 8532 / KCTC 2640 / LMG 13131 / VPI 4355).